The following is a 304-amino-acid chain: DCN1-like protein 3 (304 aa).

Disordered regions lie at residues 1–87 (MGQC…EESS) and 284–304 (EGEGRGALSSGPEGLCPEEQT). Gly2 carries the N-myristoyl glycine lipid modification. In terms of domain architecture, DCUN1 spans 86 to 278 (SSLQRLEELF…LFDTFVEWEM (193 aa)).

Part of a complex containing DCUN1D3, CUL3 and RBX1. Interacts (via the DCUN1 domain) with the unneddylated cullins: interacts with CUL1, CUL2, CUL3, CUL4A, CUL4B and CUL5; these interactions promote the cullin neddylation and the identity of the cullin dictates the affinity of the interaction. Interacts preferentially with CUL3; this interaction triggers the relocalization of CUL3 to the cell membrane where CUL3 is neddylated. Interacts (via DCUN1 domain) with RBX1. May also interact with regulators or subunits of cullin-RING ligases such as RNF7, ELOB and DDB1; these interactions are bridged by cullins. Interacts (via DCUN1 domain) with CAND1; this interaction is bridged by cullins and strongly inhibits cullin neddylation. These CAND-cullin-DCNL complexes can only be neddylated in the presence of a substrate adapter. Interacts (via DCUN1 domain) with the N-terminally acetylated form of UBE2M and UBE2F.

It is found in the cell membrane. It localises to the cytoplasm. The protein resides in the nucleus. The protein localises to the perinuclear region. Functionally, contributes to the neddylation of all cullins by transferring NEDD8 from N-terminally acetylated NEDD8-conjugating E2s enzyme to different cullin C-terminal domain-RBX complexes and may play a role in the cell cycle progression by regulating the SCF ubiquitin E3 ligase complex, after UV damage. At the cell membrane, can promote and as well inhibit cullins neddylation. The protein is DCN1-like protein 3 of Bos taurus (Bovine).